Reading from the N-terminus, the 507-residue chain is ATP synthase subunit alpha, chloroplastic (507 aa).

170–177 (GDRQTGKT) serves as a coordination point for ATP. T257 is subject to Phosphothreonine.

Belongs to the ATPase alpha/beta chains family. As to quaternary structure, F-type ATPases have 2 components, CF(1) - the catalytic core - and CF(0) - the membrane proton channel. CF(1) has five subunits: alpha(3), beta(3), gamma(1), delta(1), epsilon(1). CF(0) has four main subunits: a, b, b' and c.

The protein resides in the plastid. Its subcellular location is the chloroplast thylakoid membrane. It carries out the reaction ATP + H2O + 4 H(+)(in) = ADP + phosphate + 5 H(+)(out). Produces ATP from ADP in the presence of a proton gradient across the membrane. The alpha chain is a regulatory subunit. This chain is ATP synthase subunit alpha, chloroplastic, found in Capsella bursa-pastoris (Shepherd's purse).